A 156-amino-acid chain; its full sequence is Small ribosomal subunit protein uS7 (156 aa).

The protein belongs to the universal ribosomal protein uS7 family. As to quaternary structure, part of the 30S ribosomal subunit. Contacts proteins S9 and S11.

Functionally, one of the primary rRNA binding proteins, it binds directly to 16S rRNA where it nucleates assembly of the head domain of the 30S subunit. Is located at the subunit interface close to the decoding center, probably blocks exit of the E-site tRNA. The protein is Small ribosomal subunit protein uS7 of Mycolicibacterium smegmatis (strain ATCC 700084 / mc(2)155) (Mycobacterium smegmatis).